A 388-amino-acid polypeptide reads, in one-letter code: Paired box protein Pax-5 (388 aa).

Positions 15 to 141 (RHGGVNQLGG…SSINRIIRTK (127 aa)) form a DNA-binding region, paired. Residues 18 to 74 (GVNQLGGVFVNGRPLPDVVRQRIVELAHQGVRPCDISRQLRVSHGCVSKILGRYYET) form a PAI subdomain region. The tract at residues 93–141 (KVVDKIADYKRQNPTMFAWEIRDRLLAERVCDNDTVPSVSSINRIIRTK) is RED subdomain. The span at 143–158 (QQPTNQQIPPSNHSIA) shows a compositional bias: polar residues. Disordered regions lie at residues 143-162 (QQPT…STGS) and 191-217 (AETN…PGRD).

First detected in mid-neurula embryos in the folding neural tube. With the completion of neurulation, expression becomes localized to the midbrain/hindbrain boundary (MHB) till at least stage 40. Expression is absent from regions adjacent to the MHB. In tailbuds, weakly and transiently expressed in the developing otic vesicle from stage 21 to stage 27.

It is found in the nucleus. Probable transcription factor. The sequence is that of Paired box protein Pax-5 from Xenopus laevis (African clawed frog).